An 804-amino-acid polypeptide reads, in one-letter code: Pre-rRNA-processing protein TSR1 homolog (804 aa).

The tract at residues 1 to 67 (MAAHRPGPLK…SQLRKQKKEA (67 aa)) is disordered. Basic residues predominate over residues 13-24 (NKAHKGGRHRGR). Basic and acidic residues predominate over residues 46-55 (KELSRVDQRH). The Bms1-type G domain occupies 81 to 242 (PPHQVLVVPL…LRQLANQKQQ (162 aa)).

This sequence belongs to the TRAFAC class translation factor GTPase superfamily. Bms1-like GTPase family. TSR1 subfamily.

It is found in the nucleus. It localises to the nucleolus. In terms of biological role, required during maturation of the 40S ribosomal subunit in the nucleolus. The sequence is that of Pre-rRNA-processing protein TSR1 homolog (TSR1) from Homo sapiens (Human).